The sequence spans 369 residues: UDP-N-acetyl-3-dehydro-alpha-D-glucosamine 3-aminotranferase (369 aa).

Residue Lys190 is modified to N6-(pyridoxal phosphate)lysine.

This sequence belongs to the DegT/DnrJ/EryC1 family. Pyridoxal 5'-phosphate is required as a cofactor.

It catalyses the reaction UDP-2-acetamido-3-amino-2,3-dideoxy-alpha-D-glucopyranose + 2-oxoglutarate = UDP-2-acetamido-3-dehydro-2-deoxy-alpha-D-glucopyranose + L-glutamate. Its pathway is bacterial outer membrane biogenesis; LPS lipid A biosynthesis. Aminotranferase involved in the synthesis of 2,3-diamino-2,3-dideoxy-D-glucopyranose (GlcN3N), which is a component of lipid A in some species. Catalyzes the amination of UDP-2-acetamido-3-dehydro-2-deoxy-alpha-D-glucopyranose (UDP-3-oxo-GlcNAc) to UDP-2-acetamido-3-amino-2,3-dideoxy-alpha-D-glucopyranose (UDP-GlcNAc3N), using L-glutamate as the amine donor. Other amine donors, such as alanine and glutamine, can substitute for glutamate, but product formation is slower. This chain is UDP-N-acetyl-3-dehydro-alpha-D-glucosamine 3-aminotranferase, found in Acidithiobacillus ferrooxidans (strain ATCC 23270 / DSM 14882 / CIP 104768 / NCIMB 8455) (Ferrobacillus ferrooxidans (strain ATCC 23270)).